We begin with the raw amino-acid sequence, 77 residues long: Large ribosomal subunit protein eL20 (77 aa).

The protein belongs to the eukaryotic ribosomal protein eL20 family. Part of the 50S ribosomal subunit. Binds 23S rRNA.

This Thermococcus gammatolerans (strain DSM 15229 / JCM 11827 / EJ3) protein is Large ribosomal subunit protein eL20.